The sequence spans 430 residues: Glutamate-1-semialdehyde 2,1-aminomutase (430 aa).

At K267 the chain carries N6-(pyridoxal phosphate)lysine.

It belongs to the class-III pyridoxal-phosphate-dependent aminotransferase family. HemL subfamily. As to quaternary structure, homodimer. Pyridoxal 5'-phosphate is required as a cofactor.

The protein localises to the cytoplasm. It carries out the reaction (S)-4-amino-5-oxopentanoate = 5-aminolevulinate. It participates in porphyrin-containing compound metabolism; protoporphyrin-IX biosynthesis; 5-aminolevulinate from L-glutamyl-tRNA(Glu): step 2/2. The polypeptide is Glutamate-1-semialdehyde 2,1-aminomutase (Lawsonia intracellularis (strain PHE/MN1-00)).